A 179-amino-acid polypeptide reads, in one-letter code: ATP-dependent protease subunit HslV (179 aa).

Residue Thr-6 is part of the active site. Residues Ser-162, Cys-165, and Thr-168 each contribute to the Na(+) site.

The protein belongs to the peptidase T1B family. HslV subfamily. As to quaternary structure, a double ring-shaped homohexamer of HslV is capped on each side by a ring-shaped HslU homohexamer. The assembly of the HslU/HslV complex is dependent on binding of ATP.

It localises to the cytoplasm. It carries out the reaction ATP-dependent cleavage of peptide bonds with broad specificity.. Its activity is regulated as follows. Allosterically activated by HslU binding. Protease subunit of a proteasome-like degradation complex believed to be a general protein degrading machinery. This chain is ATP-dependent protease subunit HslV, found in Maridesulfovibrio salexigens (strain ATCC 14822 / DSM 2638 / NCIMB 8403 / VKM B-1763) (Desulfovibrio salexigens).